A 270-amino-acid chain; its full sequence is Glucan endo-1,3-beta-glucosidase (270 aa).

The signal sequence occupies residues 1 to 18 (MNAFTFPLLLAFCAFAHG). The GH16 domain occupies 22 to 270 (LDWEDEFNGG…VEYVKKWTWN (249 aa)). Glu-137 (nucleophile) is an active-site residue. The active-site Proton donor is the Glu-142.

The protein belongs to the glycosyl hydrolase 16 family.

Its subcellular location is the secreted. The enzyme catalyses Hydrolysis of (1-&gt;3)-beta-D-glucosidic linkages in (1-&gt;3)-beta-D-glucans.. Its activity is regulated as follows. Ca(2+) does not affect the enzyme activity nor the thermostability. Other cations, such as Mg(2+), Mn(2+), Cu(2+), Zn(2+), Ag(+) or Hg(2+) do not cause any serious adverse effect on the activity. Also no significant change in the activity in response to the addition of 1 mM EDTA. Hydrolyzes laminarin majorily to glucose (G1), laminaribiose (L2), laminaritriose (L3), laminaritetraose (L4) and laminaripentaose (L5). Hydrolyzes laminarioligosaccharides L3, L4, L5 and laminarihexaose (L6) to G1, L2 and L3. Hardly hydrolyzes L2. Does not hydrolyze lichenan, pustulan, carboxymethyl cellulose, locust bean gum or soluble starch. This is Glucan endo-1,3-beta-glucosidase from Cryptopygus antarcticus (Antarctic springtail).